The chain runs to 589 residues: 5'-AMP-activated protein kinase catalytic subunit alpha-1 (589 aa).

The 253-residue stretch at 24–276 (FVIKETIGKG…VKRIVNHSWF (253 aa)) folds into the Protein kinase domain. Residues 30 to 38 (IGKGAFGAV) and Lys-53 each bind ATP. Asp-147 serves as the catalytic Proton acceptor.

The protein belongs to the protein kinase superfamily. CAMK Ser/Thr protein kinase family. SNF1 subfamily.

The enzyme catalyses L-seryl-[protein] + ATP = O-phospho-L-seryl-[protein] + ADP + H(+). The catalysed reaction is L-threonyl-[protein] + ATP = O-phospho-L-threonyl-[protein] + ADP + H(+). In terms of biological role, probably does not act as a sensor that couples lifespan to information about energy levels and insulin-like signals. Together with aak-2, involved in the establishment of germline stem cell (GSC) quiescence during dauer development. Plays a role in the maintenance of glycogen stores which are necessary for resistance to hyperosmotic stress. This is 5'-AMP-activated protein kinase catalytic subunit alpha-1 (aak-1) from Caenorhabditis elegans.